Reading from the N-terminus, the 143-residue chain is UPF0102 protein Acid345_3985 (143 aa).

Belongs to the UPF0102 family.

This Koribacter versatilis (strain Ellin345) protein is UPF0102 protein Acid345_3985.